The chain runs to 182 residues: Autophagy-related protein 31 (182 aa).

A disordered region spans residues 105–134 (LTSGNDTGGDAGKKSGDISDPAAGPDVPRE).

It localises to the cytoplasm. The protein resides in the cytoskeleton. The protein localises to the preautophagosomal structure. Its function is as follows. Plays a role in starvation-induced autophagy. Involved in mitophagy. Functions with ATG17 and ATG29 at the preautophagosomal structure (PAS) in order to form normal autophagosomes under starvation conditions. May be involved in microtubule function, such as chromosome segregation and karyogamy. In Candida glabrata (strain ATCC 2001 / BCRC 20586 / JCM 3761 / NBRC 0622 / NRRL Y-65 / CBS 138) (Yeast), this protein is Autophagy-related protein 31 (CIS1).